The following is a 120-amino-acid chain: Large ribosomal subunit protein uL14 (120 aa).

The protein belongs to the universal ribosomal protein uL14 family. Part of the 50S ribosomal subunit. Forms a cluster with proteins L3 and L19. In the 70S ribosome, L14 and L19 interact and together make contacts with the 16S rRNA in bridges B5 and B8.

In terms of biological role, binds to 23S rRNA. Forms part of two intersubunit bridges in the 70S ribosome. This chain is Large ribosomal subunit protein uL14, found in Phytoplasma australiense.